The following is a 214-amino-acid chain: Calcineurin B-like protein 8 (214 aa).

EF-hand domains follow at residues 35 to 70 (EIEA…RNGS), 71 to 106 (MQNL…FHPY), 108 to 143 (PEHE…LLGE), and 152 to 187 (SIEA…NPSI). The Ca(2+) site is built by aspartate 165, asparagine 167, aspartate 169, lysine 171, and glutamate 176. Residue serine 205 is modified to Phosphoserine.

Belongs to the calcineurin regulatory subunit family. In terms of assembly, interacts with CIPK23. Interacts with CIPK14 at the cell membrane exclusively.

Its subcellular location is the cytoplasm. It localises to the nucleus. The protein localises to the cell membrane. Acts as a calcium sensor. CBL proteins interact with CIPK serine-threonine protein kinases. Binding of a CBL protein to the regulatory NAF domain of a CIPK protein lead to the activation of the kinase in a calcium-dependent manner. The sequence is that of Calcineurin B-like protein 8 (CBL8) from Arabidopsis thaliana (Mouse-ear cress).